The primary structure comprises 132 residues: Phosphoribosyl-AMP cyclohydrolase (132 aa).

A Mg(2+)-binding site is contributed by Asp-79. Cys-80 provides a ligand contact to Zn(2+). Mg(2+) is bound by residues Asp-81 and Asp-83. Residues Cys-100 and Cys-107 each contribute to the Zn(2+) site.

This sequence belongs to the PRA-CH family. Homodimer. Requires Mg(2+) as cofactor. Zn(2+) is required as a cofactor.

It localises to the cytoplasm. The enzyme catalyses 1-(5-phospho-beta-D-ribosyl)-5'-AMP + H2O = 1-(5-phospho-beta-D-ribosyl)-5-[(5-phospho-beta-D-ribosylamino)methylideneamino]imidazole-4-carboxamide. It participates in amino-acid biosynthesis; L-histidine biosynthesis; L-histidine from 5-phospho-alpha-D-ribose 1-diphosphate: step 3/9. Functionally, catalyzes the hydrolysis of the adenine ring of phosphoribosyl-AMP. This Acidovorax sp. (strain JS42) protein is Phosphoribosyl-AMP cyclohydrolase.